Here is a 354-residue protein sequence, read N- to C-terminus: Peptide chain release factor 1 (354 aa).

Gln231 is subject to N5-methylglutamine. The segment covering 284–304 (EALAKDRKEQVGSGDRSERIR) has biased composition (basic and acidic residues). The tract at residues 284 to 308 (EALAKDRKEQVGSGDRSERIRTYNF) is disordered.

It belongs to the prokaryotic/mitochondrial release factor family. Methylated by PrmC. Methylation increases the termination efficiency of RF1.

The protein localises to the cytoplasm. Peptide chain release factor 1 directs the termination of translation in response to the peptide chain termination codons UAG and UAA. This Nitratiruptor sp. (strain SB155-2) protein is Peptide chain release factor 1.